A 270-amino-acid chain; its full sequence is Monofunctional glycosyltransferase (270 aa).

Residues 1 to 10 (MKRSQRMNNS) are compositionally biased toward polar residues. The tract at residues 1-36 (MKRSQRMNNSPERHSQYRNEPHYNTYYQPVGKPPKK) is disordered. Positions 11-21 (PERHSQYRNEP) are enriched in basic and acidic residues. Residues 42–62 (IFLRLFIIFVFIYALFIGLMY) traverse the membrane as a helical segment.

This sequence belongs to the glycosyltransferase 51 family.

Its subcellular location is the cell membrane. The catalysed reaction is [GlcNAc-(1-&gt;4)-Mur2Ac(oyl-L-Ala-gamma-D-Glu-L-Lys-D-Ala-D-Ala)](n)-di-trans,octa-cis-undecaprenyl diphosphate + beta-D-GlcNAc-(1-&gt;4)-Mur2Ac(oyl-L-Ala-gamma-D-Glu-L-Lys-D-Ala-D-Ala)-di-trans,octa-cis-undecaprenyl diphosphate = [GlcNAc-(1-&gt;4)-Mur2Ac(oyl-L-Ala-gamma-D-Glu-L-Lys-D-Ala-D-Ala)](n+1)-di-trans,octa-cis-undecaprenyl diphosphate + di-trans,octa-cis-undecaprenyl diphosphate + H(+). It functions in the pathway cell wall biogenesis; peptidoglycan biosynthesis. Its function is as follows. Peptidoglycan polymerase that catalyzes glycan chain elongation using lipid-linked disaccharide-pentapeptide as the substrate. The protein is Monofunctional glycosyltransferase of Staphylococcus haemolyticus (strain JCSC1435).